The following is a 92-amino-acid chain: Putative septation protein SpoVG (92 aa).

Belongs to the SpoVG family.

In terms of biological role, could be involved in septation. The protein is Putative septation protein SpoVG of Clostridium botulinum (strain Eklund 17B / Type B).